The sequence spans 434 residues: FAD-dependent monooxygenase cfoG (434 aa).

Residues 1 to 22 (MKSSPGLHIIIVGAGITGLATA) form the signal peptide. E36 contacts FAD. Residues R193 and Y233 contribute to the active site. D314 and G327 together coordinate FAD.

This sequence belongs to the paxM FAD-dependent monooxygenase family. In terms of assembly, monomer. It depends on FAD as a cofactor.

The protein operates within secondary metabolite biosynthesis; flavonoid biosynthesis. In terms of biological role, monooxygenase; part of the gene cluster that mediates the biosynthesis of chlorflavonin, a fungal flavonoid with acetolactate synthase inhibitory activity. Within the pathway, cfoG is responsible for the hydroxylation of the flavonoid skeleton at position C8. The pathway begins with the PKS-NRPS hybrid synthetase cfoA that uses benzoic acid or p-hydroxybenzoic acid as a starter unit with four rounds of chain elongation using malonyl-CoA to form the chalcone skeleton. Then, a new type of chalcone isomerase, cfoK, catalyzes the conversion of the chalcone into a flavanone by a histidine-mediated oxa-Michael addition mechanism. The desaturation of flavanone to flavone is catalyzed by a new type of flavone synthase, the flavin mononucleotide (FMN)-dependent oxidoreductase cfoJ. Monooxygenases cfoF, cfoG, and P450 cfoH are responsible for the hydroxylation of the flavonoid skeleton at sites C3, C8, and C2', respectively. Like cfoF, the dehydratase cfoI plays also a role in the hydroxylation of position C3. Methyltransferases cfoB, cfoC, and cfoD then catalyze the methylation of C7-OH, C8-OH, and C3-OH, respectively. Finally, the monooxygenase cfoE is responsible for the chlorination of flavonoid at position C3'. The sequence is that of FAD-dependent monooxygenase cfoG from Aspergillus candidus.